We begin with the raw amino-acid sequence, 261 residues long: Hemin import ATP-binding protein HmuV (261 aa).

An ABC transporter domain is found at 3–239 (LDAADITVKL…AILSQAYGCA (237 aa)). 35 to 42 (GPNGSGKT) is an ATP binding site.

It belongs to the ABC transporter superfamily. Heme (hemin) importer (TC 3.A.1.14.5) family. As to quaternary structure, the complex is composed of two ATP-binding proteins (HmuV), two transmembrane proteins (HmuU) and a solute-binding protein (HmuT).

It localises to the cell inner membrane. Its function is as follows. Part of the ABC transporter complex HmuTUV involved in hemin import. Responsible for energy coupling to the transport system. The sequence is that of Hemin import ATP-binding protein HmuV from Roseobacter denitrificans (strain ATCC 33942 / OCh 114) (Erythrobacter sp. (strain OCh 114)).